Here is a 138-residue protein sequence, read N- to C-terminus: UPF0201 protein TK1335 (138 aa).

Belongs to the UPF0201 family.

This is UPF0201 protein TK1335 from Thermococcus kodakarensis (strain ATCC BAA-918 / JCM 12380 / KOD1) (Pyrococcus kodakaraensis (strain KOD1)).